A 248-amino-acid chain; its full sequence is Probable transcriptional regulatory protein PP_1214 (248 aa).

Residues 1 to 21 (MAGHSKWANIKHRKERQDAKR) are disordered.

The protein belongs to the TACO1 family.

It localises to the cytoplasm. This is Probable transcriptional regulatory protein PP_1214 from Pseudomonas putida (strain ATCC 47054 / DSM 6125 / CFBP 8728 / NCIMB 11950 / KT2440).